A 553-amino-acid chain; its full sequence is Mucolipin-3 (553 aa).

Over 1-62 (MANPEVLVSS…FWARGRKPWK (62 aa)) the chain is Cytoplasmic. Residues 52 to 62 (KFWARGRKPWK) are interaction with phosphoinositides. A helical transmembrane segment spans residues 63–83 (LAIQILKIAMVTIQLVLFGLS). Topologically, residues 84–283 (NQMVVAFKEE…VSGSIQKNTH (200 aa)) are extracellular. The tract at residues 104-118 (KGYMDRMDDTYAVYT) is extracellular/lumenal pore loop. Asparagine 138 carries an N-linked (GlcNAc...) asparagine glycan. Cysteines 159 and 185 form a disulfide. A glycan (N-linked (GlcNAc...) asparagine) is linked at asparagine 205. Cysteine 238 and cysteine 269 are oxidised to a cystine. Residues 284 to 304 (YMMIFDAFVILTCLASLVLCA) traverse the membrane as a helical segment. Residues 305–341 (RSVIRGLQLQQEFVNFFLLHYKKEVSASDQMEFINGW) lie on the Cytoplasmic side of the membrane. Residues 342-362 (YIMIIISDILTIVGSVLKMEI) form a helical membrane-spanning segment. At 363–371 (QAKSLTSYD) the chain is on the extracellular side. The chain crosses the membrane as a helical span at residues 372-392 (VCSILLGTSTMLVWLGVIRYL). Residues 393-414 (GFFAKYNLLILTLQAALPNVMR) are Cytoplasmic-facing. A helical transmembrane segment spans residues 415-435 (FCCCAAMIYLGYCFCGWIVLG). The Extracellular portion of the chain corresponds to 436-443 (PYHEKFRS). Residues 444-464 (LNRVSECLFSLINGDDMFSTF) constitute an intramembrane region (pore-forming). The Selectivity filter motif lies at 456-459 (NGDD). Residues 465 to 475 (AKMQQKSYLVW) lie on the Extracellular side of the membrane. Residues 476–497 (LFSRVYLYSFISLFIYMILSLF) traverse the membrane as a helical segment. The Cytoplasmic segment spans residues 498 to 553 (IALITDTYETIKHYQQDGFPETELRKFIAECKDLPNSGKYRLEDDPPGSLLCCCKK).

This sequence belongs to the transient receptor (TC 1.A.4) family. Polycystin subfamily. MCOLN3 sub-subfamily. As to quaternary structure, homotetramer. Can heterooligomerize with MCOLN1; heteromeric assemblies have different channel properties as compared to the respective homooligomers and may be tissue-specific. May heterooligomerize with TRPV5 to form a functional distinct ion channel. Interacts with GABARAPL2. Post-translationally, N-glycosylated. In terms of tissue distribution, expressed in the cochlea; particularly in the inner and outer hair cells (at protein level).

Its subcellular location is the early endosome membrane. It localises to the late endosome membrane. The protein localises to the cytoplasmic vesicle. The protein resides in the autophagosome membrane. It is found in the cell projection. Its subcellular location is the stereocilium membrane. It catalyses the reaction Ca(2+)(in) = Ca(2+)(out). The catalysed reaction is Mg(2+)(in) = Mg(2+)(out). The enzyme catalyses K(+)(in) = K(+)(out). It carries out the reaction Na(+)(in) = Na(+)(out). Channel activity is activated by PtdIns(3,5)P2 (phosphatidylinositol 3,5-bisphosphate). Inhibited by lumenal H(+) and Na(+). The channel pore shows dynamic behavior and undergoes spontaneous, Ca(2+)-dependent modulation when conducting Ca(2+). Functionally, nonselective cation channel probably playing a role in the regulation of membrane trafficking events. Acts as a Ca(2+)-permeable cation channel with inwardly rectifying activity. Mediates release of Ca(2+) from endosomes to the cytoplasm, contributes to endosomal acidification and is involved in the regulation of membrane trafficking and fusion in the endosomal pathway. Also permeable to Mg(2+), Na(+) and K(+). Does not seem to act as mechanosensory transduction channel in inner ear sensory hair cells. Proposed to play a critical role at the cochlear stereocilia ankle-link region during hair-bundle growth. Involved in the regulation of autophagy. Through association with GABARAPL2 may be involved in autophagosome formation possibly providing Ca(2+) for the fusion process. Through a possible and probably tissue-specific heteromerization with MCOLN1 may be at least in part involved in many lysosome-dependent cellular events. Possible heteromeric ion channel assemblies with TRPV5 show pharmacological similarity with TRPML3. The sequence is that of Mucolipin-3 (Mcoln3) from Mus musculus (Mouse).